The following is a 227-amino-acid chain: MALLPSSISASEFFTPVVLSFQVAAVAGIVVIILGTLAGAWMSRASFFGKTALETCFMLPLVLPPTVVGFILIVIFGKHSFIGQAIEWIFQQPVIFTWWAAVIASAVVAFPLMYQSAKTGFADIDPDIQGAAMVDGASRWKVFIHISVPLAYPSLLTGSILSLARALGEFGATLMFAGNIPGVTQTLPTAIYVALDSGNNTLAWAWVVCIVVISFLMLFFIQQKKTH.

A run of 5 helical transmembrane segments spans residues 17-37 (VVLS…LGTL), 57-77 (FMLP…VIFG), 94-114 (VIFT…PLMY), 142-162 (VFIH…SILS), and 201-221 (TLAW…LFFI). The ABC transmembrane type-1 domain occupies 17-221 (VVLSFQVAAV…VISFLMLFFI (205 aa)).

This sequence belongs to the binding-protein-dependent transport system permease family. CysTW subfamily.

It localises to the cell membrane. Its function is as follows. could be part of the binding-protein-dependent transport system for molybdenum; probably responsible for the translocation of the substrate across the membrane. This is Putative molybdenum transport system permease protein YvgM (yvgM) from Bacillus subtilis (strain 168).